The sequence spans 432 residues: Glutamate-gated chloride channel subunit beta (432 aa).

An N-terminal signal peptide occupies residues 1–18; the sequence is MSQYMMVAVAAVVAVAGS. Residues 19–249 are Extracellular-facing; that stretch reads SQISRRSTGG…MQLTLKRQFS (231 aa). Asn52 is a glycosylation site (N-linked (GlcNAc...) asparagine). Arg69, Arg88, and Ser155 together coordinate L-glutamate. A disulfide bridge connects residues Cys164 and Cys178. Ser184 is an L-glutamate binding site. Asn219 carries an N-linked (GlcNAc...) asparagine glycan. Residues Cys226 and Cys237 are joined by a disulfide bond. The chain crosses the membrane as a helical span at residues 250–272; the sequence is YYLVQLYGPTTMIVIVSWVSFWI. At 273 to 277 the chain is on the cytoplasmic side; it reads DMHST. Residues 278 to 299 traverse the membrane as a helical segment; sequence AGRVALGVTTLLTMTTMQAAIN. At 300 to 306 the chain is on the extracellular side; sequence AKLPPVS. A helical membrane pass occupies residues 307-327; sequence YVKVVDVWLGACQTFVFGALL. At 328–402 the chain is on the cytoplasmic side; it reads EYAFVSYQDS…KPDYLPAKID (75 aa). A helical transmembrane segment spans residues 403 to 426; it reads YYARFCVPLGFLAFNAIYWTSCLV. Residues 427–432 lie on the Extracellular side of the membrane; sequence MVSRLV.

This sequence belongs to the ligand-gated ion channel (TC 1.A.9) family. Glutamate-gated chloride channel (TC 1.A.9.4) subfamily. In terms of assembly, pentamer. In terms of tissue distribution, expressed in motor neuron commissures at the anterior portion of the worms.

It is found in the postsynaptic cell membrane. The protein localises to the cell membrane. Functionally, glutamate-gated chloride channel subunit; channel properties may be modulated by the formation of heteromeric channels. Glutamate binding triggers a rapidly reversible current, while the anti-helmintic drug ivermectin triggers a permanently open channel configuration. The chain is Glutamate-gated chloride channel subunit beta from Haemonchus contortus (Barber pole worm).